Reading from the N-terminus, the 144-residue chain is Large ribosomal subunit protein uL13 (144 aa).

This sequence belongs to the universal ribosomal protein uL13 family. In terms of assembly, part of the 50S ribosomal subunit.

Its function is as follows. This protein is one of the early assembly proteins of the 50S ribosomal subunit, although it is not seen to bind rRNA by itself. It is important during the early stages of 50S assembly. The protein is Large ribosomal subunit protein uL13 of Clostridium perfringens (strain 13 / Type A).